Here is a 365-residue protein sequence, read N- to C-terminus: MTITGIIAEFNPFHNGHKYLLDQAEGLKIVAMSGNFMQRGEPAIVDKWTRTQMALENGADLVVELPFLVSVQAADFFGQGAMDILDRLGIDSLVFGTEEVRDYQKIADLYTEKGAEMEKFVENLPDSLSYPQKTQAMWKEFAGLDFSGNTPNHVLALAYAKAVAGRNIKLHPIQRQGAGYHSVNKDVDFASATALRQHQKDQDFLERFMPSVALFEQASKVIWEDYFPLLRYQILSNPDLTTIYQVNQEMAVRIKEAIKTAQSVEELVELVTTKRYTKARVRRLLTYILMQARESDLPEAIHVLGFTEKGRQHLKSLKGQVSLVSRIGKEPWDAMTQKADQIYQLGKPSIAEQNFGRVPIRIETN.

ATP contacts are provided by residues 7 to 20, Gly96, Asn152, and Arg175; that span reads IAEFNPFHNGHKYL.

Belongs to the TmcAL family.

It localises to the cytoplasm. The catalysed reaction is cytidine(34) in elongator tRNA(Met) + acetate + ATP = N(4)-acetylcytidine(34) in elongator tRNA(Met) + AMP + diphosphate. Its function is as follows. Catalyzes the formation of N(4)-acetylcytidine (ac(4)C) at the wobble position of elongator tRNA(Met), using acetate and ATP as substrates. First activates an acetate ion to form acetyladenylate (Ac-AMP) and then transfers the acetyl group to tRNA to form ac(4)C34. This is tRNA(Met) cytidine acetate ligase from Streptococcus pneumoniae serotype 4 (strain ATCC BAA-334 / TIGR4).